A 974-amino-acid chain; its full sequence is Collagen alpha-1(I) chain (974 aa).

The span at 1 to 14 (GISVPGPMGPSGPR) shows a compositional bias: low complexity. Positions 1 to 974 (GISVPGPMGP…PGPPGPPGPP (974 aa)) are disordered. A 4-hydroxyproline mark is found at proline 17, proline 20, proline 23, proline 32, proline 35, proline 38, proline 53, proline 68, proline 75, and proline 81. The segment covering 25 to 44 (PQGFQGPPGEPGEPGASGPM) has biased composition (low complexity). Positions 56–73 (NGDDGEAGKPGRPGERRG) are enriched in basic and acidic residues. Position 84 is a 5-hydroxylysine; alternate (lysine 84). O-linked (Gal...) hydroxylysine; alternate glycosylation is present at lysine 84. Serine 90 is modified (phosphoserine). Residues 98-114 (DAGPAGPKGEPGSPGEN) are compositionally biased toward low complexity. Residues proline 108, proline 111, proline 117, proline 126, proline 132, proline 153, proline 162, proline 165, proline 192, proline 195, proline 207, proline 213, proline 222, proline 228, proline 231, and proline 245 each carry the 4-hydroxyproline modification. The span at 132–150 (PGASGPAGARGNDGATGAA) shows a compositional bias: low complexity. Residues 152-164 (PPGPTGPAGPPGF) are compositionally biased toward pro residues. The span at 198–228 (AGAAGPAGNPGADGQPGAKGANGAPGIAGAP) shows a compositional bias: low complexity. Lysine 248 bears the 5-hydroxylysine mark. Proline 254, proline 257, proline 269, proline 278, proline 293, proline 299, proline 308, and proline 314 each carry 4-hydroxyproline. A compositionally biased stretch (gly residues) spans 303–312 (GERGGPGSRG). Lysine 323 carries the post-translational modification 5-hydroxylysine. 24 positions are modified to 4-hydroxyproline: proline 328, proline 337, proline 343, proline 349, proline 358, proline 361, proline 370, proline 379, proline 385, proline 397, proline 406, proline 415, proline 418, proline 436, proline 454, proline 460, proline 466, proline 472, proline 484, proline 493, proline 505, proline 520, proline 527, and proline 536. The segment covering 352-378 (KGLTGSPGSPGPDGKTGPPGPAGQDGR) has biased composition (low complexity). The span at 387-406 (ARGQAGVMGFPGPKGAAGEP) shows a compositional bias: low complexity. Over residues 504-517 (APGNDGAKGDAGAP) the composition is skewed to low complexity. Lysine 548 is modified (5-hydroxylysine). 4-hydroxyproline is present on residues proline 554, proline 569, and proline 575. Over residues 581–595 (SGPSGPAGPTGARGA) the composition is skewed to low complexity. Serine 584 is subject to Phosphoserine. 4-hydroxyproline occurs at positions 596, 602, 605, 614, 620, 638, 647, and 656. Residues 608 to 635 (AGFAGPPGADGQPGAKGEPGDAGAKGDA) show a composition bias toward low complexity. Residues 637 to 649 (PPGPAGPTGPPGP) are compositionally biased toward pro residues. Lysine 659 bears the 5-hydroxylysine mark. Low complexity predominate over residues 664–680 (SAGPPGATGFPGAAGRV). 4-hydroxyproline is present on residues proline 668 and proline 674. At proline 682 the chain carries 3-hydroxyproline. A 4-hydroxyproline mark is found at proline 683, proline 692, proline 695, proline 716, proline 725, proline 733, proline 742, proline 760, proline 769, proline 772, proline 778, proline 793, proline 799, proline 805, proline 814, and proline 820. A compositionally biased stretch (low complexity) spans 709–718 (ETGPAGRPGE). Positions 730–742 (KGSPGADGPAGAP) are enriched in low complexity. A compositionally biased stretch (pro residues) spans 792-802 (PPGPVGPPGLA). A compositionally biased stretch (low complexity) spans 804 to 826 (PPGESGREGSPGAEGSPGRDGSP). A compositionally biased stretch (pro residues) spans 828–844 (PKGPPGAPGAPGAPGPV). Lysine 829 carries the post-translational modification 5-hydroxylysine. Proline 832, proline 835, and proline 838 each carry 4-hydroxyproline. Over residues 865-879 (AGPAGARGPAGPQGP) the composition is skewed to low complexity. Over residues 880–894 (RGDKGETGEQGDRRG) the composition is skewed to basic and acidic residues. Residue lysine 883 is modified to 5-hydroxylysine. 4-hydroxyproline occurs at positions 905, 908, 926, and 941. The segment covering 908–941 (PGEQGPSGASGPAGPRGPPGSAGSPGKDGLNGLP) has biased composition (low complexity). The residue at position 946 (proline 946) is a 3-hydroxyproline. Proline 947 bears the 4-hydroxyproline mark. Residues 959–974 (VGPPGPPGPPGPPGPP) show a composition bias toward pro residues. The residue at position 961 (proline 961) is a 3-hydroxyproline. A 4-hydroxyproline modification is found at proline 962. 3-hydroxyproline is present on proline 964. Proline 965 is subject to 4-hydroxyproline. Proline 967 carries the post-translational modification 3-hydroxyproline. Residues proline 968, proline 971, and proline 974 each carry the 4-hydroxyproline modification.

The protein belongs to the fibrillar collagen family. In terms of assembly, trimers of one alpha 2(I) and two alpha 1(I) chains. Contains mostly 4-hydroxyproline. Proline residues at the third position of the tripeptide repeating unit (G-X-Y) are hydroxylated in some or all of the chains. Post-translationally, contains 3-hydroxyproline at a few sites. This modification occurs on the first proline residue in the sequence motif Gly-Pro-Hyp, where Hyp is 4-hydroxyproline. In terms of processing, lysine residues at the third position of the tripeptide repeating unit (G-X-Y) are 5-hydroxylated in some or all of the chains. O-glycosylated on hydroxylated lysine residues. The O-linked glycan consists of a Glc-Gal disaccharide. In terms of tissue distribution, expressed in bones.

The protein localises to the secreted. The protein resides in the extracellular space. It localises to the extracellular matrix. Its function is as follows. Type I collagen is a member of group I collagen (fibrillar forming collagen). The polypeptide is Collagen alpha-1(I) chain (Scelidodon sp. (strain SLP-2019) (South American ground sloth)).